Here is a 550-residue protein sequence, read N- to C-terminus: CTP synthase (550 aa).

Residues 1–267 (MKTKFIFITG…DQKIAIMLRL (267 aa)) form an amidoligase domain region. A CTP-binding site is contributed by S14. S14 lines the UTP pocket. Residues 15–20 (SLGKGL) and D72 each bind ATP. The Mg(2+) site is built by D72 and E141. CTP contacts are provided by residues 148–150 (DIE), 188–193 (KTKPTQ), and K224. UTP is bound by residues 188–193 (KTKPTQ) and K224. Residues 292–545 (TIGIVGKYVD…IKAAKKEAMG (254 aa)) form the Glutamine amidotransferase type-1 domain. G354 provides a ligand contact to L-glutamine. The Nucleophile; for glutamine hydrolysis role is filled by C381. Residues 382–385 (LGMQ), E405, and R473 each bind L-glutamine. Catalysis depends on residues H518 and E520.

It belongs to the CTP synthase family. Homotetramer.

The catalysed reaction is UTP + L-glutamine + ATP + H2O = CTP + L-glutamate + ADP + phosphate + 2 H(+). It carries out the reaction L-glutamine + H2O = L-glutamate + NH4(+). The enzyme catalyses UTP + NH4(+) + ATP = CTP + ADP + phosphate + 2 H(+). The protein operates within pyrimidine metabolism; CTP biosynthesis via de novo pathway; CTP from UDP: step 2/2. With respect to regulation, allosterically activated by GTP, when glutamine is the substrate; GTP has no effect on the reaction when ammonia is the substrate. The allosteric effector GTP functions by stabilizing the protein conformation that binds the tetrahedral intermediate(s) formed during glutamine hydrolysis. Inhibited by the product CTP, via allosteric rather than competitive inhibition. Its function is as follows. Catalyzes the ATP-dependent amination of UTP to CTP with either L-glutamine or ammonia as the source of nitrogen. Regulates intracellular CTP levels through interactions with the four ribonucleotide triphosphates. In Nitratidesulfovibrio vulgaris (strain DSM 19637 / Miyazaki F) (Desulfovibrio vulgaris), this protein is CTP synthase.